The sequence spans 311 residues: Aspartate carbamoyltransferase catalytic subunit (311 aa).

Residues Arg55 and Thr56 each contribute to the carbamoyl phosphate site. Lys85 lines the L-aspartate pocket. Carbamoyl phosphate is bound by residues Arg106, His135, and Gln138. L-aspartate contacts are provided by Arg168 and Arg230. Carbamoyl phosphate is bound by residues Leu268 and Pro269.

This sequence belongs to the aspartate/ornithine carbamoyltransferase superfamily. ATCase family. Heterododecamer (2C3:3R2) of six catalytic PyrB chains organized as two trimers (C3), and six regulatory PyrI chains organized as three dimers (R2).

The catalysed reaction is carbamoyl phosphate + L-aspartate = N-carbamoyl-L-aspartate + phosphate + H(+). It participates in pyrimidine metabolism; UMP biosynthesis via de novo pathway; (S)-dihydroorotate from bicarbonate: step 2/3. In terms of biological role, catalyzes the condensation of carbamoyl phosphate and aspartate to form carbamoyl aspartate and inorganic phosphate, the committed step in the de novo pyrimidine nucleotide biosynthesis pathway. The polypeptide is Aspartate carbamoyltransferase catalytic subunit (Yersinia pseudotuberculosis serotype O:1b (strain IP 31758)).